Consider the following 93-residue polypeptide: Putative pterin-4-alpha-carbinolamine dehydratase (93 aa).

Belongs to the pterin-4-alpha-carbinolamine dehydratase family.

The enzyme catalyses (4aS,6R)-4a-hydroxy-L-erythro-5,6,7,8-tetrahydrobiopterin = (6R)-L-erythro-6,7-dihydrobiopterin + H2O. The polypeptide is Putative pterin-4-alpha-carbinolamine dehydratase (Nostoc sp. (strain PCC 7120 / SAG 25.82 / UTEX 2576)).